The chain runs to 183 residues: Orotate phosphoribosyltransferase (183 aa).

5-phospho-alpha-D-ribose 1-diphosphate contacts are provided by residues arginine 90, lysine 91, lysine 94, and 115 to 123 (DDVATTGGS). Positions 119 and 147 each coordinate orotate.

It belongs to the purine/pyrimidine phosphoribosyltransferase family. PyrE subfamily. As to quaternary structure, homodimer. Mg(2+) serves as cofactor.

The catalysed reaction is orotidine 5'-phosphate + diphosphate = orotate + 5-phospho-alpha-D-ribose 1-diphosphate. It functions in the pathway pyrimidine metabolism; UMP biosynthesis via de novo pathway; UMP from orotate: step 1/2. In terms of biological role, catalyzes the transfer of a ribosyl phosphate group from 5-phosphoribose 1-diphosphate to orotate, leading to the formation of orotidine monophosphate (OMP). The polypeptide is Orotate phosphoribosyltransferase (Methanopyrus kandleri (strain AV19 / DSM 6324 / JCM 9639 / NBRC 100938)).